Reading from the N-terminus, the 432-residue chain is D-amino acid dehydrogenase 1 (432 aa).

3-17 contacts FAD; it reads VLILGSGVVGTVSAY.

This sequence belongs to the DadA oxidoreductase family. It depends on FAD as a cofactor.

It carries out the reaction a D-alpha-amino acid + A + H2O = a 2-oxocarboxylate + AH2 + NH4(+). Its function is as follows. Oxidative deamination of D-amino acids. The protein is D-amino acid dehydrogenase 1 (dadA1) of Pseudomonas putida (strain ATCC 47054 / DSM 6125 / CFBP 8728 / NCIMB 11950 / KT2440).